The primary structure comprises 345 residues: Probable fructokinase-3 (345 aa).

It belongs to the carbohydrate kinase PfkB family.

It carries out the reaction D-fructose + ATP = D-fructose 6-phosphate + ADP + H(+). The protein operates within glycan biosynthesis; starch biosynthesis. Functionally, may play an important role in maintaining the flux of carbon towards starch formation. This is Probable fructokinase-3 from Arabidopsis thaliana (Mouse-ear cress).